The chain runs to 629 residues: DNA mismatch repair protein MutL (629 aa).

The protein belongs to the DNA mismatch repair MutL/HexB family.

Functionally, this protein is involved in the repair of mismatches in DNA. It is required for dam-dependent methyl-directed DNA mismatch repair. May act as a 'molecular matchmaker', a protein that promotes the formation of a stable complex between two or more DNA-binding proteins in an ATP-dependent manner without itself being part of a final effector complex. In Rhodospirillum rubrum (strain ATCC 11170 / ATH 1.1.1 / DSM 467 / LMG 4362 / NCIMB 8255 / S1), this protein is DNA mismatch repair protein MutL.